A 151-amino-acid polypeptide reads, in one-letter code: Prefoldin subunit alpha (151 aa).

Belongs to the prefoldin subunit alpha family. In terms of assembly, heterohexamer of two alpha and four beta subunits.

The protein resides in the cytoplasm. In terms of biological role, molecular chaperone capable of stabilizing a range of proteins. Seems to fulfill an ATP-independent, HSP70-like function in archaeal de novo protein folding. This chain is Prefoldin subunit alpha (pfdA), found in Aeropyrum pernix (strain ATCC 700893 / DSM 11879 / JCM 9820 / NBRC 100138 / K1).